Consider the following 513-residue polypeptide: ATP synthase subunit alpha (513 aa).

169–176 (GDRQTGKT) contributes to the ATP binding site.

Belongs to the ATPase alpha/beta chains family. In terms of assembly, F-type ATPases have 2 components, CF(1) - the catalytic core - and CF(0) - the membrane proton channel. CF(1) has five subunits: alpha(3), beta(3), gamma(1), delta(1), epsilon(1). CF(0) has three main subunits: a(1), b(2) and c(9-12). The alpha and beta chains form an alternating ring which encloses part of the gamma chain. CF(1) is attached to CF(0) by a central stalk formed by the gamma and epsilon chains, while a peripheral stalk is formed by the delta and b chains.

The protein localises to the cell inner membrane. The enzyme catalyses ATP + H2O + 4 H(+)(in) = ADP + phosphate + 5 H(+)(out). Produces ATP from ADP in the presence of a proton gradient across the membrane. The alpha chain is a regulatory subunit. The sequence is that of ATP synthase subunit alpha from Haemophilus influenzae (strain 86-028NP).